The sequence spans 936 residues: Sine oculis-binding protein homolog A (936 aa).

Residues 1-14 (MAEMEKEGRPPESK) are compositionally biased toward basic and acidic residues. Disordered stretches follow at residues 1-46 (MAEM…GQAG) and 108-151 (ASTL…HGGL). The segment covering 108-144 (ASTLENSSGSPPHANSSGSTPTSRNGVTAESSVNPSS) has biased composition (polar residues). 2 consecutive FCS-type zinc fingers follow at residues 169–207 (EDSS…KCFA) and 247–287 (LKTN…KCLN). Disordered stretches follow at residues 311 to 330 (LPTS…LTPE), 336 to 424 (LSEL…VMTP), 486 to 511 (SPHL…HPAA), 574 to 632 (NPQR…KQTE), 697 to 727 (PPPA…DTYS), and 842 to 877 (DSAG…EDHA). Residues 349–382 (GATIAGPSGSTSGSPSEAGTVCSSSSSSSSSSSS) are compositionally biased toward low complexity. Residues 395–404 (SLPPPHPPPI) are compositionally biased toward pro residues. Composition is skewed to polar residues over residues 617-632 (PPNS…KQTE), 708-717 (DGSTSISTGT), and 850-859 (NDQSAITTGT).

It belongs to the SOBP family.

In terms of biological role, implicated in development of the cochlea. This chain is Sine oculis-binding protein homolog A (sobpa), found in Danio rerio (Zebrafish).